We begin with the raw amino-acid sequence, 304 residues long: N-acetylmuramic acid 6-phosphate etherase (304 aa).

Positions I62 to K225 constitute an SIS domain. Catalysis depends on E90, which acts as the Proton donor. The active site involves E121.

It belongs to the GCKR-like family. MurNAc-6-P etherase subfamily. As to quaternary structure, homodimer.

It carries out the reaction N-acetyl-D-muramate 6-phosphate + H2O = N-acetyl-D-glucosamine 6-phosphate + (R)-lactate. The protein operates within amino-sugar metabolism; 1,6-anhydro-N-acetylmuramate degradation. It functions in the pathway amino-sugar metabolism; N-acetylmuramate degradation. It participates in cell wall biogenesis; peptidoglycan recycling. Specifically catalyzes the cleavage of the D-lactyl ether substituent of MurNAc 6-phosphate, producing GlcNAc 6-phosphate and D-lactate. Together with AnmK, is also required for the utilization of anhydro-N-acetylmuramic acid (anhMurNAc) either imported from the medium or derived from its own cell wall murein, and thus plays a role in cell wall recycling. The protein is N-acetylmuramic acid 6-phosphate etherase of Actinobacillus succinogenes (strain ATCC 55618 / DSM 22257 / CCUG 43843 / 130Z).